Reading from the N-terminus, the 320-residue chain is L-lactate dehydrogenase (320 aa).

NAD(+) contacts are provided by residues 15–16 (FV), Asp-37, Lys-42, Tyr-68, and 82–83 (GA). Substrate-binding positions include Gln-85, Arg-91, and 123–126 (NPVD). NAD(+) contacts are provided by residues 121-123 (ATN) and Ser-146. 151 to 154 (DSAR) serves as a coordination point for substrate. Residues Arg-156 and 168–172 (QNVHA) each bind beta-D-fructose 1,6-bisphosphate. The Proton acceptor role is filled by His-178. Tyr-223 is subject to Phosphotyrosine. Thr-232 serves as a coordination point for substrate.

This sequence belongs to the LDH/MDH superfamily. LDH family. In terms of assembly, homotetramer.

Its subcellular location is the cytoplasm. It carries out the reaction (S)-lactate + NAD(+) = pyruvate + NADH + H(+). It functions in the pathway fermentation; pyruvate fermentation to lactate; (S)-lactate from pyruvate: step 1/1. Its activity is regulated as follows. Allosterically activated by fructose 1,6-bisphosphate (FBP). Functionally, catalyzes the conversion of lactate to pyruvate. The sequence is that of L-lactate dehydrogenase from Bacillus subtilis (strain 168).